The following is a 332-amino-acid chain: Acetyl-coenzyme A carboxylase carboxyl transferase subunit beta (332 aa).

Positions 24 to 293 (LWIKCPDSGH…PEVIVESEPE (270 aa)) constitute a CoA carboxyltransferase N-terminal domain. The interval 288-332 (VESEPEPEPEPVVAEIIPPTSDLPVSAPAPAPVAAQTPAPAAPSA) is disordered. The span at 298 to 332 (PVVAEIIPPTSDLPVSAPAPAPVAAQTPAPAAPSA) shows a compositional bias: low complexity.

It belongs to the AccD/PCCB family. In terms of assembly, acetyl-CoA carboxylase is a heterohexamer composed of biotin carboxyl carrier protein (AccB), biotin carboxylase (AccC) and two subunits each of ACCase subunit alpha (AccA) and ACCase subunit beta (AccD).

The protein resides in the cytoplasm. The enzyme catalyses N(6)-carboxybiotinyl-L-lysyl-[protein] + acetyl-CoA = N(6)-biotinyl-L-lysyl-[protein] + malonyl-CoA. Its pathway is lipid metabolism; malonyl-CoA biosynthesis; malonyl-CoA from acetyl-CoA: step 1/1. In terms of biological role, component of the acetyl coenzyme A carboxylase (ACC) complex. Biotin carboxylase (BC) catalyzes the carboxylation of biotin on its carrier protein (BCCP) and then the CO(2) group is transferred by the transcarboxylase to acetyl-CoA to form malonyl-CoA. This is Acetyl-coenzyme A carboxylase carboxyl transferase subunit beta from Rhodopseudomonas palustris (strain BisB18).